The chain runs to 290 residues: Porphobilinogen deaminase (290 aa).

Cysteine 238 bears the S-(dipyrrolylmethanemethyl)cysteine mark.

This sequence belongs to the HMBS family. As to quaternary structure, monomer. Dipyrromethane serves as cofactor.

The enzyme catalyses 4 porphobilinogen + H2O = hydroxymethylbilane + 4 NH4(+). The protein operates within porphyrin-containing compound metabolism; protoporphyrin-IX biosynthesis; coproporphyrinogen-III from 5-aminolevulinate: step 2/4. Its function is as follows. Tetrapolymerization of the monopyrrole PBG into the hydroxymethylbilane pre-uroporphyrinogen in several discrete steps. The sequence is that of Porphobilinogen deaminase from Clostridium botulinum (strain Eklund 17B / Type B).